Consider the following 248-residue polypeptide: 2,3-bisphosphoglycerate-dependent phosphoglycerate mutase (248 aa).

Residues 7-14 (RHGESIWN), 20-21 (TG), Arg59, 86-89 (ERHY), Lys97, 113-114 (RR), and 182-183 (GN) contribute to the substrate site. The active-site Tele-phosphohistidine intermediate is the His8. The Proton donor/acceptor role is filled by Glu86.

This sequence belongs to the phosphoglycerate mutase family. BPG-dependent PGAM subfamily.

The catalysed reaction is (2R)-2-phosphoglycerate = (2R)-3-phosphoglycerate. It participates in carbohydrate degradation; glycolysis; pyruvate from D-glyceraldehyde 3-phosphate: step 3/5. Its function is as follows. Catalyzes the interconversion of 2-phosphoglycerate and 3-phosphoglycerate. The protein is 2,3-bisphosphoglycerate-dependent phosphoglycerate mutase of Methylacidiphilum infernorum (isolate V4) (Methylokorus infernorum (strain V4)).